A 397-amino-acid polypeptide reads, in one-letter code: Cysteine desulfurase IscS (397 aa).

Pyridoxal 5'-phosphate-binding positions include 72–73 (GS), N152, Q180, and 200–202 (SAH). The residue at position 203 (K203) is an N6-(pyridoxal phosphate)lysine. T238 serves as a coordination point for pyridoxal 5'-phosphate. C328 (cysteine persulfide intermediate) is an active-site residue. C328 provides a ligand contact to [2Fe-2S] cluster.

Belongs to the class-V pyridoxal-phosphate-dependent aminotransferase family. NifS/IscS subfamily. As to quaternary structure, homodimer. Forms a heterotetramer with IscU, interacts with other sulfur acceptors. Requires pyridoxal 5'-phosphate as cofactor.

Its subcellular location is the cytoplasm. The enzyme catalyses (sulfur carrier)-H + L-cysteine = (sulfur carrier)-SH + L-alanine. It participates in cofactor biosynthesis; iron-sulfur cluster biosynthesis. Its function is as follows. Master enzyme that delivers sulfur to a number of partners involved in Fe-S cluster assembly, tRNA modification or cofactor biosynthesis. Catalyzes the removal of elemental sulfur atoms from cysteine to produce alanine. Functions as a sulfur delivery protein for Fe-S cluster synthesis onto IscU, an Fe-S scaffold assembly protein, as well as other S acceptor proteins. This chain is Cysteine desulfurase IscS, found in Clostridium botulinum (strain ATCC 19397 / Type A).